The following is a 225-amino-acid chain: Ribonuclease 3 (225 aa).

The 123-residue stretch at Ile-5–Asp-127 folds into the RNase III domain. Glu-40 contacts Mg(2+). Asp-44 is a catalytic residue. Positions 113 and 116 each coordinate Mg(2+). Glu-116 is an active-site residue. The 71-residue stretch at Asp-154 to Asn-224 folds into the DRBM domain.

Belongs to the ribonuclease III family. Homodimer. Requires Mg(2+) as cofactor.

Its subcellular location is the cytoplasm. It catalyses the reaction Endonucleolytic cleavage to 5'-phosphomonoester.. Digests double-stranded RNA. Involved in the processing of primary rRNA transcript to yield the immediate precursors to the large and small rRNAs (23S and 16S). Processes some mRNAs, and tRNAs when they are encoded in the rRNA operon. Processes pre-crRNA and tracrRNA of type II CRISPR loci if present in the organism. This is Ribonuclease 3 from Vibrio atlanticus (strain LGP32) (Vibrio splendidus (strain Mel32)).